The primary structure comprises 153 residues: Ribosome maturation factor RimP (153 aa).

This sequence belongs to the RimP family.

It localises to the cytoplasm. Functionally, required for maturation of 30S ribosomal subunits. The chain is Ribosome maturation factor RimP from Acidithiobacillus ferrooxidans (strain ATCC 53993 / BNL-5-31) (Leptospirillum ferrooxidans (ATCC 53993)).